Reading from the N-terminus, the 647-residue chain is XK-related protein 4 (647 aa).

A helical membrane pass occupies residues 142–162; sequence WFGLTLFFVVLGSLSVQVFSF. Residues 193 to 238 are disordered; the sequence is VSSGSAAGEGEARPSTPQRQASNASKSNIAATNSGSNSNGATRTSG. Ser-197 bears the Phosphoserine mark. Positions 207-236 are enriched in polar residues; that stretch reads STPQRQASNASKSNIAATNSGSNSNGATRT. 7 helical membrane passes run 245–265, 328–348, 362–382, 393–415, 425–445, 454–474, and 484–504; these read CSFC…GQVW, LQAL…WALA, KPIS…TIAA, VFQL…WIVH, WEEI…WFNV, LFIY…LWYL, and FAIP…VFML.

Belongs to the XK family. Homodimer; homodimerization takes place upon caspase cleavage. Interacts with the processed C-terminus of XRCC4 (protein XRCC4, C-terminus); interaction promotes the phospholipid scramblase activity. In terms of processing, undergoes proteolytic processing by caspase-3 (CASP3), caspase-6 (CASP6) and caspase-7 (CASP7) to generate the XK-related protein 4, processed form, leading to its activation.

The protein resides in the cell membrane. It carries out the reaction a 1,2-diacyl-sn-glycero-3-phospho-L-serine(in) = a 1,2-diacyl-sn-glycero-3-phospho-L-serine(out). Its activity is regulated as follows. Phospholipid scramblase activity is activated upon caspase cleavage to generate the XK-related protein 4, processed form. Does not act prior the onset of apoptosis. With respect to regulation, homodimerizes upon caspase cleavage. Phospholipid scramblase activity is activated following interaction with the processed C-terminus of XRCC4 (protein XRCC4, C-terminus). Its function is as follows. Phospholipid scramblase that promotes phosphatidylserine exposure on apoptotic cell surface. Phosphatidylserine is a specific marker only present at the surface of apoptotic cells and acts as a specific signal for engulfment. This chain is XK-related protein 4, found in Rattus norvegicus (Rat).